We begin with the raw amino-acid sequence, 290 residues long: Eukaryotic translation initiation factor 3 subunit F-2 (290 aa).

An MPN domain is found at 12–150 (VRLQPLVLFQ…TRLYCAVTMG (139 aa)).

Belongs to the eIF-3 subunit F family. Component of the eukaryotic translation initiation factor 3 (eIF-3) complex. The eIF-3 complex interacts with pix.

It is found in the cytoplasm. Functionally, component of the eukaryotic translation initiation factor 3 (eIF-3) complex, which is involved in protein synthesis of a specialized repertoire of mRNAs and, together with other initiation factors, stimulates binding of mRNA and methionyl-tRNAi to the 40S ribosome. The eIF-3 complex specifically targets and initiates translation of a subset of mRNAs involved in cell proliferation. The polypeptide is Eukaryotic translation initiation factor 3 subunit F-2 (Drosophila mojavensis (Fruit fly)).